The primary structure comprises 255 residues: Ribonuclease PH (255 aa).

Phosphate-binding positions include Arg86 and 124 to 126 (GTR).

Belongs to the RNase PH family. As to quaternary structure, homohexameric ring arranged as a trimer of dimers.

The catalysed reaction is tRNA(n+1) + phosphate = tRNA(n) + a ribonucleoside 5'-diphosphate. In terms of biological role, phosphorolytic 3'-5' exoribonuclease that plays an important role in tRNA 3'-end maturation. Removes nucleotide residues following the 3'-CCA terminus of tRNAs; can also add nucleotides to the ends of RNA molecules by using nucleoside diphosphates as substrates, but this may not be physiologically important. Probably plays a role in initiation of 16S rRNA degradation (leading to ribosome degradation) during starvation. This chain is Ribonuclease PH, found in Hydrogenobaculum sp. (strain Y04AAS1).